The primary structure comprises 409 residues: Glutamyl-tRNA reductase (409 aa).

Substrate is bound by residues 48 to 51 (TCNR), Ser89, 94 to 96 (ENE), and Gln100. The active-site Nucleophile is Cys49. 165-170 (GNGMLA) provides a ligand contact to NADP(+).

This sequence belongs to the glutamyl-tRNA reductase family. As to quaternary structure, homodimer.

It carries out the reaction (S)-4-amino-5-oxopentanoate + tRNA(Glu) + NADP(+) = L-glutamyl-tRNA(Glu) + NADPH + H(+). It functions in the pathway porphyrin-containing compound metabolism; protoporphyrin-IX biosynthesis; 5-aminolevulinate from L-glutamyl-tRNA(Glu): step 1/2. Functionally, catalyzes the NADPH-dependent reduction of glutamyl-tRNA(Glu) to glutamate 1-semialdehyde (GSA). The polypeptide is Glutamyl-tRNA reductase (Thermoplasma volcanium (strain ATCC 51530 / DSM 4299 / JCM 9571 / NBRC 15438 / GSS1)).